The sequence spans 248 residues: Phosphatidylserine decarboxylase proenzyme (248 aa).

Serine 206 functions as the Schiff-base intermediate with substrate; via pyruvic acid in the catalytic mechanism. Position 206 is a pyruvic acid (Ser); by autocatalysis (serine 206).

This sequence belongs to the phosphatidylserine decarboxylase family. PSD-A subfamily. In terms of assembly, heterodimer of a large membrane-associated beta subunit and a small pyruvoyl-containing alpha subunit. Requires pyruvate as cofactor. In terms of processing, is synthesized initially as an inactive proenzyme. Formation of the active enzyme involves a self-maturation process in which the active site pyruvoyl group is generated from an internal serine residue via an autocatalytic post-translational modification. Two non-identical subunits are generated from the proenzyme in this reaction, and the pyruvate is formed at the N-terminus of the alpha chain, which is derived from the carboxyl end of the proenzyme. The post-translation cleavage follows an unusual pathway, termed non-hydrolytic serinolysis, in which the side chain hydroxyl group of the serine supplies its oxygen atom to form the C-terminus of the beta chain, while the remainder of the serine residue undergoes an oxidative deamination to produce ammonia and the pyruvoyl prosthetic group on the alpha chain.

It localises to the cell membrane. It carries out the reaction a 1,2-diacyl-sn-glycero-3-phospho-L-serine + H(+) = a 1,2-diacyl-sn-glycero-3-phosphoethanolamine + CO2. The protein operates within phospholipid metabolism; phosphatidylethanolamine biosynthesis; phosphatidylethanolamine from CDP-diacylglycerol: step 2/2. In terms of biological role, catalyzes the formation of phosphatidylethanolamine (PtdEtn) from phosphatidylserine (PtdSer). The protein is Phosphatidylserine decarboxylase proenzyme of Nitrobacter hamburgensis (strain DSM 10229 / NCIMB 13809 / X14).